Reading from the N-terminus, the 180-residue chain is HTH-type transcriptional regulator EcpR (180 aa).

The HTH luxR-type domain occupies 122-180 (KDIKKDKITDREMKIIRMTAQGMQPKSIARIENCSVKTVYTHRRNAEAKLYSKIYKLVQ). Residues 146 to 165 (PKSIARIENCSVKTVYTHRR) constitute a DNA-binding region (H-T-H motif).

Belongs to the EcpR/MatA family.

The protein localises to the cytoplasm. Functionally, part of the ecpRABCDE operon, which encodes the E.coli common pilus (ECP). ECP plays a dual role in early-stage biofilm development and host cell recognition. Positively regulates the expression of the ecp operon. The chain is HTH-type transcriptional regulator EcpR (ecpR) from Klebsiella pneumoniae (strain 342).